Consider the following 197-residue polypeptide: Large ribosomal subunit protein bL25 (197 aa).

The protein belongs to the bacterial ribosomal protein bL25 family. CTC subfamily. Part of the 50S ribosomal subunit; part of the 5S rRNA/L5/L18/L25 subcomplex. Contacts the 5S rRNA. Binds to the 5S rRNA independently of L5 and L18.

In terms of biological role, this is one of the proteins that binds to the 5S RNA in the ribosome where it forms part of the central protuberance. This chain is Large ribosomal subunit protein bL25, found in Streptomyces avermitilis (strain ATCC 31267 / DSM 46492 / JCM 5070 / NBRC 14893 / NCIMB 12804 / NRRL 8165 / MA-4680).